The primary structure comprises 858 residues: Bifunctional uridylyltransferase/uridylyl-removing enzyme (858 aa).

Positions 1–324 (MSASVAAPPP…PATSGVTRVL (324 aa)) are uridylyltransferase. The tract at residues 325-681 (SPGRFVEKQG…ARPSPVGDAL (357 aa)) is uridylyl-removing. Residues 443–565 (VDQHILMVLR…VGNERRLTAL (123 aa)) form the HD domain. 2 consecutive ACT domains span residues 682–761 (QVLV…PEPS) and 790–858 (ILSV…AIAV).

Belongs to the GlnD family. It depends on Mg(2+) as a cofactor.

It catalyses the reaction [protein-PII]-L-tyrosine + UTP = [protein-PII]-uridylyl-L-tyrosine + diphosphate. The enzyme catalyses [protein-PII]-uridylyl-L-tyrosine + H2O = [protein-PII]-L-tyrosine + UMP + H(+). Its activity is regulated as follows. Uridylyltransferase (UTase) activity is inhibited by glutamine, while glutamine activates uridylyl-removing (UR) activity. Its function is as follows. Modifies, by uridylylation and deuridylylation, the PII regulatory proteins (GlnB and homologs), in response to the nitrogen status of the cell that GlnD senses through the glutamine level. Under low glutamine levels, catalyzes the conversion of the PII proteins and UTP to PII-UMP and PPi, while under higher glutamine levels, GlnD hydrolyzes PII-UMP to PII and UMP (deuridylylation). Thus, controls uridylylation state and activity of the PII proteins, and plays an important role in the regulation of nitrogen assimilation and metabolism. This is Bifunctional uridylyltransferase/uridylyl-removing enzyme from Burkholderia thailandensis (strain ATCC 700388 / DSM 13276 / CCUG 48851 / CIP 106301 / E264).